We begin with the raw amino-acid sequence, 582 residues long: Aspartate--tRNA(Asp/Asn) ligase (582 aa).

Residue Glu-177 participates in L-aspartate binding. An aspartate region spans residues 201 to 204 (QLFK). Arg-223 lines the L-aspartate pocket. ATP-binding positions include 223–225 (RDE) and Gln-232. Residue His-447 participates in L-aspartate binding. ATP is bound at residue Glu-481. An L-aspartate-binding site is contributed by Arg-488. 533 to 536 (GLDR) serves as a coordination point for ATP.

The protein belongs to the class-II aminoacyl-tRNA synthetase family. Type 1 subfamily. Homodimer.

It localises to the cytoplasm. It carries out the reaction tRNA(Asx) + L-aspartate + ATP = L-aspartyl-tRNA(Asx) + AMP + diphosphate. Aspartyl-tRNA synthetase with relaxed tRNA specificity since it is able to aspartylate not only its cognate tRNA(Asp) but also tRNA(Asn). Reaction proceeds in two steps: L-aspartate is first activated by ATP to form Asp-AMP and then transferred to the acceptor end of tRNA(Asp/Asn). This is Aspartate--tRNA(Asp/Asn) ligase from Chlamydia trachomatis serovar L2 (strain ATCC VR-902B / DSM 19102 / 434/Bu).